A 227-amino-acid polypeptide reads, in one-letter code: Cytochrome c oxidase subunit 2 (227 aa).

The Mitochondrial intermembrane portion of the chain corresponds to 1 to 14 (MAYPMQLGFQDATS). A helical membrane pass occupies residues 15-45 (PIMEELLHFHDHTLMIVFLISSLVLYIISLM). At 46-59 (LTTKLTHTSTMDAQ) the chain is on the mitochondrial matrix side. A helical membrane pass occupies residues 60–87 (EVETIWTILPAIILILIALPSLRILYMM). The Mitochondrial intermembrane segment spans residues 88–227 (DEINNPSLTV…YFEKWSASML (140 aa)). Cu cation is bound by residues H161, C196, E198, C200, H204, and M207. Mg(2+) is bound at residue E198. Y218 carries the phosphotyrosine modification.

This sequence belongs to the cytochrome c oxidase subunit 2 family. Component of the cytochrome c oxidase (complex IV, CIV), a multisubunit enzyme composed of 14 subunits. The complex is composed of a catalytic core of 3 subunits MT-CO1, MT-CO2 and MT-CO3, encoded in the mitochondrial DNA, and 11 supernumerary subunits COX4I, COX5A, COX5B, COX6A, COX6B, COX6C, COX7A, COX7B, COX7C, COX8 and NDUFA4, which are encoded in the nuclear genome. The complex exists as a monomer or a dimer and forms supercomplexes (SCs) in the inner mitochondrial membrane with NADH-ubiquinone oxidoreductase (complex I, CI) and ubiquinol-cytochrome c oxidoreductase (cytochrome b-c1 complex, complex III, CIII), resulting in different assemblies (supercomplex SCI(1)III(2)IV(1) and megacomplex MCI(2)III(2)IV(2)). Found in a complex with TMEM177, COA6, COX18, COX20, SCO1 and SCO2. Interacts with TMEM177 in a COX20-dependent manner. Interacts with COX20. Interacts with COX16. Cu cation is required as a cofactor.

It localises to the mitochondrion inner membrane. The catalysed reaction is 4 Fe(II)-[cytochrome c] + O2 + 8 H(+)(in) = 4 Fe(III)-[cytochrome c] + 2 H2O + 4 H(+)(out). Its function is as follows. Component of the cytochrome c oxidase, the last enzyme in the mitochondrial electron transport chain which drives oxidative phosphorylation. The respiratory chain contains 3 multisubunit complexes succinate dehydrogenase (complex II, CII), ubiquinol-cytochrome c oxidoreductase (cytochrome b-c1 complex, complex III, CIII) and cytochrome c oxidase (complex IV, CIV), that cooperate to transfer electrons derived from NADH and succinate to molecular oxygen, creating an electrochemical gradient over the inner membrane that drives transmembrane transport and the ATP synthase. Cytochrome c oxidase is the component of the respiratory chain that catalyzes the reduction of oxygen to water. Electrons originating from reduced cytochrome c in the intermembrane space (IMS) are transferred via the dinuclear copper A center (CU(A)) of subunit 2 and heme A of subunit 1 to the active site in subunit 1, a binuclear center (BNC) formed by heme A3 and copper B (CU(B)). The BNC reduces molecular oxygen to 2 water molecules using 4 electrons from cytochrome c in the IMS and 4 protons from the mitochondrial matrix. This Bison bonasus (European bison) protein is Cytochrome c oxidase subunit 2 (MT-CO2).